Consider the following 105-residue polypeptide: Ig lambda-1 chain C region (105 aa).

One can recognise an Ig-like domain in the interval 6-100 (PSVTLFPPSS…EGHTVEKSLS (95 aa)). C27 and C86 are disulfide-bonded.

This Mus musculus (Mouse) protein is Ig lambda-1 chain C region.